A 197-amino-acid chain; its full sequence is Outer-membrane lipoprotein LolB (197 aa).

The first 20 residues, 1-20 (MNRSRRLALFCLGAPLLLQA), serve as a signal peptide directing secretion. C21 carries N-palmitoyl cysteine lipidation. A lipid anchor (S-diacylglycerol cysteine) is attached at C21.

This sequence belongs to the LolB family. In terms of assembly, monomer.

It is found in the cell outer membrane. In terms of biological role, plays a critical role in the incorporation of lipoproteins in the outer membrane after they are released by the LolA protein. The chain is Outer-membrane lipoprotein LolB from Cupriavidus necator (strain ATCC 17699 / DSM 428 / KCTC 22496 / NCIMB 10442 / H16 / Stanier 337) (Ralstonia eutropha).